The sequence spans 81 residues: Acyl carrier protein 2 (81 aa).

The 79-residue stretch at 1–79 (MTETEILERI…DVIGAVQSLL (79 aa)) folds into the Carrier domain. At serine 39 the chain carries O-(pantetheine 4'-phosphoryl)serine.

The protein belongs to the acyl carrier protein (ACP) family. 4'-phosphopantetheine is transferred from CoA to a specific serine of apo-ACP by AcpS. This modification is essential for activity because fatty acids are bound in thioester linkage to the sulfhydryl of the prosthetic group.

The protein resides in the cytoplasm. The protein operates within lipid metabolism; fatty acid biosynthesis. Functionally, carrier of the growing fatty acid chain in fatty acid biosynthesis. The chain is Acyl carrier protein 2 from Ralstonia nicotianae (strain ATCC BAA-1114 / GMI1000) (Ralstonia solanacearum).